We begin with the raw amino-acid sequence, 303 residues long: uncharacterized protein (303 aa).

The next 4 membrane-spanning stretches (helical) occupy residues 55-77 (FLVKVAVLCMFISMTLASFLFIQ), 92-111 (PAVFSIFTVICIFMTYTKII), 208-230 (FSLPHYMSLMFCGSIIVVYATSL), and 240-257 (IPHIFIFLLLIIFLKILI).

The protein localises to the cell membrane. This is an uncharacterized protein from Bacillus subtilis (strain 168).